A 406-amino-acid chain; its full sequence is Imidazolonepropionase (406 aa).

Residues His-75 and His-77 each coordinate Fe(3+). 2 residues coordinate Zn(2+): His-75 and His-77. 4-imidazolone-5-propanoate is bound by residues Arg-84, Tyr-147, and His-180. Tyr-147 serves as a coordination point for N-formimidoyl-L-glutamate. His-245 lines the Fe(3+) pocket. His-245 provides a ligand contact to Zn(2+). Gln-248 serves as a coordination point for 4-imidazolone-5-propanoate. A Fe(3+)-binding site is contributed by Asp-320. Residue Asp-320 coordinates Zn(2+). Positions 322 and 324 each coordinate N-formimidoyl-L-glutamate. 4-imidazolone-5-propanoate is bound at residue Thr-325.

This sequence belongs to the metallo-dependent hydrolases superfamily. HutI family. Requires Zn(2+) as cofactor. It depends on Fe(3+) as a cofactor.

It localises to the cytoplasm. It carries out the reaction 4-imidazolone-5-propanoate + H2O = N-formimidoyl-L-glutamate. Its pathway is amino-acid degradation; L-histidine degradation into L-glutamate; N-formimidoyl-L-glutamate from L-histidine: step 3/3. In terms of biological role, catalyzes the hydrolytic cleavage of the carbon-nitrogen bond in imidazolone-5-propanoate to yield N-formimidoyl-L-glutamate. It is the third step in the universal histidine degradation pathway. The sequence is that of Imidazolonepropionase from Hyphomonas neptunium (strain ATCC 15444).